The sequence spans 59 residues: MKILSVLLLALIICSIVGWSEAQFTNVSCTTSKECWSVCQRLHNTSRGKCMNKKCRCYS.

Residues 1–22 (MKILSVLLLALIICSIVGWSEA) form the signal peptide. A Pyrrolidone carboxylic acid modification is found at Q23. Cystine bridges form between C29–C50, C35–C55, and C39–C57. Residues 48-55 (GKCMNKKC) are interaction with Ca(2+)-activated K(+) channels.

The protein belongs to the short scorpion toxin superfamily. Potassium channel inhibitor family. Alpha-KTx 01 subfamily. In terms of tissue distribution, expressed by the venom gland.

It is found in the secreted. Its function is as follows. This toxin inhibits numerous potassium channels: shaker (Ki=227 nM), Kv1.2/KCNA2 (nanomolar range), Kv1.3/KCNA3 (nanomolar range), Kv1.5/KCNA5 (Kd&gt;100 nM), Kv1.6/KCNA6 (Ki=22 nM), KCa1.1/KCNMA1 (IC(50)=5.9 nM). It blocks channel activity by a simple bimolecular inhibition process. It also shows a weak interaction with nicotinic acetylcholine receptors (nAChR), suggesting it may weakly inhibit it. It also exhibits pH-specific antimicrobial activities against bacteria (B.subtilis, E.coli and S.aureus) and the fungus C.albicans. This Leiurus hebraeus (Hebrew deathstalker scorpion) protein is Potassium channel toxin alpha-KTx 1.1.